A 493-amino-acid polypeptide reads, in one-letter code: Cobyric acid synthase (493 aa).

A GATase cobBQ-type domain is found at 246 to 440 (PIDIAVIKMP…IHGVFDGVVF (195 aa)). The active-site Nucleophile is Cys326. His432 is an active-site residue.

This sequence belongs to the CobB/CobQ family. CobQ subfamily.

Its pathway is cofactor biosynthesis; adenosylcobalamin biosynthesis. Functionally, catalyzes amidations at positions B, D, E, and G on adenosylcobyrinic A,C-diamide. NH(2) groups are provided by glutamine, and one molecule of ATP is hydrogenolyzed for each amidation. The polypeptide is Cobyric acid synthase (Clostridium botulinum (strain Okra / Type B1)).